The following is a 317-amino-acid chain: Probable cell division protein WhiA (317 aa).

Positions 267-300 (SLKELGEMLHPPVGKSGVNHRLRRLELIARQVRG) form a DNA-binding region, H-T-H motif.

This sequence belongs to the WhiA family.

Functionally, involved in cell division and chromosome segregation. The sequence is that of Probable cell division protein WhiA from Moorella thermoacetica (strain ATCC 39073 / JCM 9320).